Here is a 106-residue protein sequence, read N- to C-terminus: uncharacterized protein (106 aa).

Helical transmembrane passes span 5 to 27 (IFVIGVFIVALALSAFHWVGIII), 42 to 64 (AVAAGLALSLFIFGAFLAYLAYM), and 76 to 98 (LPYISILLCMALAVISATITNFF).

It is found in the cell membrane. This is an uncharacterized protein from Archaeoglobus fulgidus (strain ATCC 49558 / DSM 4304 / JCM 9628 / NBRC 100126 / VC-16).